The primary structure comprises 359 residues: CMP-N-acetylneuraminate-poly-alpha-2,8-sialyltransferase (359 aa).

The Cytoplasmic segment spans residues 1–7 (MRSIRKR). The chain crosses the membrane as a helical; Signal-anchor for type II membrane protein span at residues 8–20 (WTICTISLLLIFY). Over 21–359 (KTKEIARTEE…KLTTGKCVKQ (339 aa)) the chain is Lumenal. N-linked (GlcNAc...) asparagine glycosylation is found at N50, N74, and N119. 2 cysteine pairs are disulfide-bonded: C142–C292 and C156–C356. Positions 147 and 170 each coordinate CMP-N-acetyl-beta-neuraminate. Residues N204 and N219 are each glycosylated (N-linked (GlcNAc...) asparagine). S279, T280, G281, and W301 together coordinate CMP-N-acetyl-beta-neuraminate. The active-site Proton donor/acceptor is H331.

Belongs to the glycosyltransferase 29 family. In terms of processing, autopolysialylated.

The protein resides in the golgi apparatus membrane. The protein localises to the secreted. The enzyme catalyses [N-acetyl-alpha-D-neuraminosyl-(2-&gt;8)](n) + CMP-N-acetyl-beta-neuraminate = [N-acetyl-alpha-D-neuraminosyl-(2-&gt;8)](n+1) + CMP + H(+). Catalyzes the transfer of a sialic acid from a CMP-linked sialic acid donor onto a terminal alpha-2,3-, alpha-2,6-, or alpha-2,8-linked sialic acid of an N-linked glycan protein acceptor through alpha-2,8-linkages. Therefore, participates in polysialic acid synthesis on various sialylated N-acetyllactosaminyl oligosaccharides, including NCAM1 N-glycans, FETUB N-glycans and AHSG. It is noteworthy that alpha-2,3-linked sialic acid is apparently a better acceptor than alpha-2,6-linked sialic acid. The chain is CMP-N-acetylneuraminate-poly-alpha-2,8-sialyltransferase (ST8SIA4) from Pan troglodytes (Chimpanzee).